The sequence spans 253 residues: Phosphoglycerate mutase 2 (253 aa).

Thr-3 is subject to Phosphothreonine. Residues 10 to 17, 23 to 24, Arg-62, 89 to 92, Lys-100, and 116 to 117 contribute to the substrate site; these read RHGESTWN, CG, ERHY, and RR. The active-site Tele-phosphohistidine intermediate is His-11. Ser-14 is subject to Phosphoserine. Catalysis depends on Glu-89, which acts as the Proton donor/acceptor. A Phosphoserine modification is found at Ser-118. Phosphotyrosine is present on residues Tyr-132 and Tyr-133. Ser-135 carries the post-translational modification Phosphoserine. Thr-152 carries the phosphothreonine modification. 187–188 contacts substrate; sequence GN.

Belongs to the phosphoglycerate mutase family. BPG-dependent PGAM subfamily. As to quaternary structure, homodimer.

The enzyme catalyses (2R)-2-phosphoglycerate = (2R)-3-phosphoglycerate. The catalysed reaction is (2R)-3-phospho-glyceroyl phosphate = (2R)-2,3-bisphosphoglycerate + H(+). Its function is as follows. Interconversion of 3- and 2-phosphoglycerate with 2,3-bisphosphoglycerate as the primer of the reaction. Can also catalyze the reaction of EC 5.4.2.4 (synthase), but with a reduced activity. The polypeptide is Phosphoglycerate mutase 2 (PGAM2) (Bos taurus (Bovine)).